A 414-amino-acid polypeptide reads, in one-letter code: Peptide chain release factor subunit 1 (414 aa).

This sequence belongs to the eukaryotic release factor 1 family. Heterodimer of two subunits, one of which binds GTP.

Its subcellular location is the cytoplasm. Its function is as follows. Directs the termination of nascent peptide synthesis (translation) in response to the termination codons UAA, UAG and UGA. The polypeptide is Peptide chain release factor subunit 1 (prf1) (Pyrococcus abyssi (strain GE5 / Orsay)).